The following is a 398-amino-acid chain: Mannitol-1-phosphate 5-dehydrogenase (398 aa).

10-21 (AVHFGAGNIGRG) is an NAD(+) binding site. The active site involves K221.

This sequence belongs to the mannitol dehydrogenase family. Monomer.

The enzyme catalyses D-mannitol 1-phosphate + NAD(+) = beta-D-fructose 6-phosphate + NADH + H(+). Functionally, catalyzes the NAD(H)-dependent interconversion of D-fructose 6-phosphate and D-mannitol 1-phosphate in the mannitol metabolic pathway. The polypeptide is Mannitol-1-phosphate 5-dehydrogenase (Neurospora crassa (strain ATCC 24698 / 74-OR23-1A / CBS 708.71 / DSM 1257 / FGSC 987)).